A 415-amino-acid polypeptide reads, in one-letter code: Casein kinase I isoform delta (415 aa).

Positions 9-277 constitute a Protein kinase domain; sequence YRLGRKIGSG…YLRQLFRNLF (269 aa). ATP is bound by residues 15 to 23 and lysine 38; that span reads IGSGSFGDI. Aspartate 128 serves as the catalytic Proton acceptor. The centrosomal localization signal (CLS) stretch occupies residues 278-364; sequence HRQGFSYDYV…TSPRPVSGME (87 aa). A compositionally biased stretch (basic and acidic residues) spans 301–315; it reads ADDAERERRDREERL. The segment at 301 to 415 is disordered; sequence ADDAERERRD…SSGLQSVVHR (115 aa). The autoinhibitory stretch occupies residues 317-342; that stretch reads HSRNPATRGLPSTASGRLRGTQEVAP. Phosphoserine occurs at positions 328 and 331. The span at 347–358 shows a compositional bias: polar residues; sequence TPTSHTANTSPR. Serine 370 is subject to Phosphoserine. Arginine 375 bears the Omega-N-methylarginine mark. Residues 380-400 show a composition bias toward polar residues; that stretch reads NISSSDLTGRQDTSRMSTSQI. Residues serine 382, serine 383, serine 384, serine 407, and serine 411 each carry the phosphoserine modification.

The protein belongs to the protein kinase superfamily. CK1 Ser/Thr protein kinase family. Casein kinase I subfamily. In terms of assembly, monomer. Component of the circadian core oscillator, which includes the CRY proteins, CLOCK, or NPAS2, ARTNL/BMAL1 or ARTNL2/BMAL2, CSNK1D and/or CSNK1E, TIMELESS and the PER proteins. Interacts with DNMT1 and MAP1A. Interacts directly with PER1 and PER2 which may lead to their degradation. Interacts with MAPT/TAU, SNAPIN, DBNDD2, AIB1/NCOA3 and ESR1. Interacts with AKAP9/AKAP450; this interaction promotes centrosomal subcellular location. Binds to tubulins in mitotic cells upon DNA damage. Interacts with GJA1. Interacts with DDX3X; this interaction enhances CSNK1D kinase activity in vitro, but it is unclear whether this interaction is physiologically relevant. Interacts with FAM83A, FAM83B, FAM83E and FAM83H (via DUF1669). Post-translationally, autophosphorylated on serine and threonine residues; this autophosphorylation represses activity. Reactivated by phosphatase-mediated dephosphorylation. May be dephosphorylated by PP1.

The protein localises to the cytoplasm. The protein resides in the nucleus. It is found in the cytoskeleton. Its subcellular location is the microtubule organizing center. It localises to the centrosome. The protein localises to the perinuclear region. The protein resides in the cell membrane. It is found in the spindle. Its subcellular location is the golgi apparatus. The enzyme catalyses L-seryl-[protein] + ATP = O-phospho-L-seryl-[protein] + ADP + H(+). The catalysed reaction is L-threonyl-[protein] + ATP = O-phospho-L-threonyl-[protein] + ADP + H(+). It carries out the reaction L-seryl-[tau protein] + ATP = O-phospho-L-seryl-[tau protein] + ADP + H(+). It catalyses the reaction L-threonyl-[tau protein] + ATP = O-phospho-L-threonyl-[tau protein] + ADP + H(+). With respect to regulation, drug-mediated inhibition leads to a delay of the oscillations with the magnitude of this effect dependent upon the timing of drug administration. Inhibited by phosphorylation. Exhibits substrate-dependent heparin activation. In terms of biological role, essential serine/threonine-protein kinase that regulates diverse cellular growth and survival processes including Wnt signaling, DNA repair and circadian rhythms. It can phosphorylate a large number of proteins. Casein kinases are operationally defined by their preferential utilization of acidic proteins such as caseins as substrates. Phosphorylates connexin-43/GJA1, MAP1A, SNAPIN, MAPT/TAU, TOP2A, DCK, HIF1A, EIF6, p53/TP53, DVL2, DVL3, ESR1, AIB1/NCOA3, DNMT1, PKD2, YAP1, PER1 and PER2. Central component of the circadian clock. In balance with PP1, determines the circadian period length through the regulation of the speed and rhythmicity of PER1 and PER2 phosphorylation. Controls PER1 and PER2 nuclear transport and degradation. YAP1 phosphorylation promotes its SCF(beta-TRCP) E3 ubiquitin ligase-mediated ubiquitination and subsequent degradation. DNMT1 phosphorylation reduces its DNA-binding activity. Phosphorylation of ESR1 and AIB1/NCOA3 stimulates their activity and coactivation. Phosphorylation of DVL2 and DVL3 regulates WNT3A signaling pathway that controls neurite outgrowth. Phosphorylates NEDD9/HEF1. EIF6 phosphorylation promotes its nuclear export. Triggers down-regulation of dopamine receptors in the forebrain. Activates DCK in vitro by phosphorylation. TOP2A phosphorylation favors DNA cleavable complex formation. May regulate the formation of the mitotic spindle apparatus in extravillous trophoblast. Modulates connexin-43/GJA1 gap junction assembly by phosphorylation. Probably involved in lymphocyte physiology. Regulates fast synaptic transmission mediated by glutamate. This is Casein kinase I isoform delta (CSNK1D) from Bos taurus (Bovine).